Reading from the N-terminus, the 424-residue chain is Protein shisa-9 (424 aa).

An N-terminal signal peptide occupies residues 1 to 23; it reads MRRVLRLLLGCFLTELCARVCRA. The Extracellular segment spans residues 24 to 149; sequence QERAGHGQLA…DPLHDPTKDK (126 aa). N-linked (GlcNAc...) asparagine glycans are attached at residues Asn45, Asn89, and Asn116. A helical membrane pass occupies residues 150 to 170; that stretch reads TNLIVYIICGVVAVMVLVGIF. Topologically, residues 171 to 424 are cytoplasmic; it reads TKLGLEKAHR…ITNSKTEVTV (254 aa). A disordered region spans residues 333 to 424; the sequence is PRAFSPEHGP…ITNSKTEVTV (92 aa). Polar residues predominate over residues 414–424; the sequence is FITNSKTEVTV.

The protein belongs to the shisa family. SHISA9 subfamily. Component of some AMPA receptors (ionotropic glutamate receptors) complex, at least composed of some AMPA receptor (GRIA1, GRIA2 and/or GRIA3), CACNG2 and SHISA9, as well as low level of DLG4.

It is found in the cell projection. The protein localises to the dendritic spine membrane. The protein resides in the synapse. Its function is as follows. Regulator of short-term neuronal synaptic plasticity in the dentate gyrus. Associates with AMPA receptors (ionotropic glutamate receptors) in synaptic spines and promotes AMPA receptor desensitization at excitatory synapses. In Homo sapiens (Human), this protein is Protein shisa-9 (SHISA9).